The primary structure comprises 274 residues: Orotidine 5'-phosphate decarboxylase (274 aa).

Residues Asp-40, 62–64 (KTH), 93–102 (DRKFVDIGNT), Tyr-227, and Arg-245 each bind substrate. Residue Lys-95 is the Proton donor of the active site.

Belongs to the OMP decarboxylase family.

The enzyme catalyses orotidine 5'-phosphate + H(+) = UMP + CO2. The protein operates within pyrimidine metabolism; UMP biosynthesis via de novo pathway; UMP from orotate: step 2/2. The sequence is that of Orotidine 5'-phosphate decarboxylase (URA3) from Coccidioides immitis (strain RS) (Valley fever fungus).